The sequence spans 488 residues: Glutamyl-tRNA(Gln) amidotransferase subunit A (488 aa).

Catalysis depends on charge relay system residues Lys77 and Ser152. Residue Ser176 is the Acyl-ester intermediate of the active site.

It belongs to the amidase family. GatA subfamily. Heterotrimer of A, B and C subunits.

It carries out the reaction L-glutamyl-tRNA(Gln) + L-glutamine + ATP + H2O = L-glutaminyl-tRNA(Gln) + L-glutamate + ADP + phosphate + H(+). Allows the formation of correctly charged Gln-tRNA(Gln) through the transamidation of misacylated Glu-tRNA(Gln) in organisms which lack glutaminyl-tRNA synthetase. The reaction takes place in the presence of glutamine and ATP through an activated gamma-phospho-Glu-tRNA(Gln). This is Glutamyl-tRNA(Gln) amidotransferase subunit A from Streptococcus suis (strain 05ZYH33).